Consider the following 332-residue polypeptide: Protein EXORDIUM-like 6 (332 aa).

A signal peptide spans 1-27 (MAMASASSSSSSISVIIFLLLAPLCLS). N-linked (GlcNAc...) asparagine glycans are attached at residues N36, N102, and N143.

Belongs to the EXORDIUM family.

Its subcellular location is the secreted. The protein localises to the extracellular space. It is found in the apoplast. Functionally, may play a role in a brassinosteroid-dependent regulation of growth and development. This is Protein EXORDIUM-like 6 (EXL6) from Arabidopsis thaliana (Mouse-ear cress).